Reading from the N-terminus, the 204-residue chain is ATP-dependent Clp protease proteolytic subunit (204 aa).

Serine 102 serves as the catalytic Nucleophile. Histidine 127 is an active-site residue.

The protein belongs to the peptidase S14 family. As to quaternary structure, fourteen ClpP subunits assemble into 2 heptameric rings which stack back to back to give a disk-like structure with a central cavity, resembling the structure of eukaryotic proteasomes.

The protein localises to the cytoplasm. It catalyses the reaction Hydrolysis of proteins to small peptides in the presence of ATP and magnesium. alpha-casein is the usual test substrate. In the absence of ATP, only oligopeptides shorter than five residues are hydrolyzed (such as succinyl-Leu-Tyr-|-NHMec, and Leu-Tyr-Leu-|-Tyr-Trp, in which cleavage of the -Tyr-|-Leu- and -Tyr-|-Trp bonds also occurs).. Cleaves peptides in various proteins in a process that requires ATP hydrolysis. Has a chymotrypsin-like activity. Plays a major role in the degradation of misfolded proteins. The protein is ATP-dependent Clp protease proteolytic subunit of Neisseria meningitidis serogroup A / serotype 4A (strain DSM 15465 / Z2491).